The primary structure comprises 240 residues: NAD(P)H-hydrate epimerase (240 aa).

The YjeF N-terminal domain maps to 15 to 224; the sequence is AQEIDAELMG…SYNLKLPCYP (210 aa). Position 66–70 (66–70) interacts with (6S)-NADPHX; the sequence is NQGGD. Residues Gln-67 and Asp-129 each contribute to the K(+) site. (6S)-NADPHX is bound by residues 133-139 and Asp-162; that span reads GFSFHSE. Ser-165 provides a ligand contact to K(+).

This sequence belongs to the NnrE/AIBP family. Requires K(+) as cofactor.

The protein resides in the cytoplasm. It is found in the mitochondrion. It catalyses the reaction (6R)-NADHX = (6S)-NADHX. The catalysed reaction is (6R)-NADPHX = (6S)-NADPHX. Catalyzes the epimerization of the S- and R-forms of NAD(P)HX, a damaged form of NAD(P)H that is a result of enzymatic or heat-dependent hydration. This is a prerequisite for the S-specific NAD(P)H-hydrate dehydratase to allow the repair of both epimers of NAD(P)HX. This chain is NAD(P)H-hydrate epimerase, found in Puccinia graminis f. sp. tritici (strain CRL 75-36-700-3 / race SCCL) (Black stem rust fungus).